The chain runs to 99 residues: MTKQPKPCSFLFHISLLSALFVFLLISFAFTTSYKLKSGINSLGHKRILASNFDFTPFLKNKDRTQRQRQSPSLTVKENGFWYNDEERVVPSGPNPLHH.

The signal sequence occupies residues 1–31 (MTKQPKPCSFLFHISLLSALFVFLLISFAFT). Residues P91 and P94 each carry the hydroxyproline modification. O-linked (Ara...) hydroxyproline glycosylation occurs at P94.

The protein belongs to the CLV3/ESR signal peptide family. Post-translationally, the O-glycosylation (arabinosylation) of the hydroxyproline Pro-94 enhances binding affinity of the CLE11p peptide for its receptor. Mostly expressed in seedlings, roots and siliques, and, to a lower extent, in leaves, flowers, stems and apex.

The protein resides in the secreted. It is found in the extracellular space. Its function is as follows. Extracellular signal peptide that regulates cell fate. Represses root apical meristem maintenance. Regulates the transition of protophloem cells from proliferation to differentiation, thus impinging on postembryonic growth capacity of the root meristem; this signaling pathway requires CRN and CLV2. The polypeptide is CLAVATA3/ESR (CLE)-related protein 11 (Arabidopsis thaliana (Mouse-ear cress)).